The chain runs to 144 residues: Oxoglutarate dehydrogenase inhibitor (144 aa).

T14 is subject to Phosphothreonine. An FHA domain is found at 68-117 (TAAGRHPDSDIFLDDVTVSRRHAEFRRNGDQYEVVDVGSLNGTYVNREPK).

It is found in the cytoplasm. In terms of biological role, an essential component of the PknG signaling pathway. When unphosphorylated, it inhibits the activity of 2-oxoglutarate dehydrogenase. When phosphorylated it does not inhibit 2-oxoglutarate dehydrogenase. The sequence is that of Oxoglutarate dehydrogenase inhibitor (odhI) from Corynebacterium jeikeium (strain K411).